Here is a 342-residue protein sequence, read N- to C-terminus: S-adenosylmethionine:tRNA ribosyltransferase-isomerase (342 aa).

This sequence belongs to the QueA family. As to quaternary structure, monomer.

Its subcellular location is the cytoplasm. The enzyme catalyses 7-aminomethyl-7-carbaguanosine(34) in tRNA + S-adenosyl-L-methionine = epoxyqueuosine(34) in tRNA + adenine + L-methionine + 2 H(+). The protein operates within tRNA modification; tRNA-queuosine biosynthesis. Its function is as follows. Transfers and isomerizes the ribose moiety from AdoMet to the 7-aminomethyl group of 7-deazaguanine (preQ1-tRNA) to give epoxyqueuosine (oQ-tRNA). The sequence is that of S-adenosylmethionine:tRNA ribosyltransferase-isomerase from Moorella thermoacetica (strain ATCC 39073 / JCM 9320).